We begin with the raw amino-acid sequence, 761 residues long: 3'-5' RNA nuclease TATDN2 (761 aa).

6 disordered regions span residues 1–90 (MASE…HFLG), 135–181 (CSLK…LRDQ), 197–294 (KSMP…RRTV), 318–337 (KDREVVMEHPSSGSDWSDVE), 343–364 (RFSQEEPVSLKPSAVPEPSSFT), and 388–486 (SSPK…PKSH). Low complexity-rich tracts occupy residues 33 to 52 (APSSRPAQRSASRSGGPSSP) and 66 to 85 (SRRLSWGSSRRRNNSSSSFS). Residues 247 to 294 (QKEKDATPEVSMEEDKTVPERSSFYDRRVVIDPQEKPSEEPLGDRRTV) show a composition bias toward basic and acidic residues. Low complexity predominate over residues 388–402 (SSPKPSSYPSTGSSS). Over residues 417-431 (SDYSPNSTGSVQNTS) the composition is skewed to polar residues. Residues 452–470 (RSSEEREVKEKRTFQEEMP) are compositionally biased toward basic and acidic residues. A divalent metal cation contacts are provided by His499, His501, Glu593, His630, His655, and Asp707.

This sequence belongs to the metallo-dependent hydrolases superfamily. TatD-type hydrolase family. Mg(2+) serves as cofactor.

The protein localises to the nucleus. Mg(2+)-dependent 3'RNA exonuclease and endonuclease that resolves R-loops via specific degradation of R-loop RNA stucture. Shows no activity against D-loop and minimal activity against the RNA strand of an RNA-DNA hybrid duplex oligomer. Has no 3' or 5' exonuclease activity, no uracil glycosylase activity, and no 5' flap endonuclease activity on DNA substrates. May have a role in maintaining genomic stability through its role in R-loop resolution. This is 3'-5' RNA nuclease TATDN2 (TATDN2) from Homo sapiens (Human).